A 256-amino-acid polypeptide reads, in one-letter code: Type III pantothenate kinase (256 aa).

Residue Asp-6 to Tyr-13 participates in ATP binding. Substrate is bound by residues Tyr-99 and Gly-106–Arg-109. The active-site Proton acceptor is the Asp-108. Asp-129 contacts K(+). Residue Thr-132 participates in ATP binding. Thr-184 is a substrate binding site.

It belongs to the type III pantothenate kinase family. Homodimer. It depends on NH4(+) as a cofactor. Requires K(+) as cofactor.

The protein localises to the cytoplasm. It carries out the reaction (R)-pantothenate + ATP = (R)-4'-phosphopantothenate + ADP + H(+). The protein operates within cofactor biosynthesis; coenzyme A biosynthesis; CoA from (R)-pantothenate: step 1/5. Its function is as follows. Catalyzes the phosphorylation of pantothenate (Pan), the first step in CoA biosynthesis. The polypeptide is Type III pantothenate kinase (Legionella pneumophila (strain Paris)).